The primary structure comprises 226 residues: Phosphoribosyl-dephospho-CoA transferase (226 aa).

Residues aspartate 148 and aspartate 150 contribute to the active site.

Belongs to the MdcG family.

It carries out the reaction apo-[malonate decarboxylase ACP] + 2'-(5''-triphospho-alpha-D-ribosyl)-3'-dephospho-CoA = holo-[malonate decarboxylase ACP] + diphosphate. Its function is as follows. Transfers 2'-(5-triphosphoribosyl)-3'-dephosphocoenzyme-A to the apo-[acyl-carrier-protein] of the malonate decarboxylase to yield holo-[acyl-carrier-protein]. This Bradyrhizobium diazoefficiens (strain JCM 10833 / BCRC 13528 / IAM 13628 / NBRC 14792 / USDA 110) protein is Phosphoribosyl-dephospho-CoA transferase.